A 131-amino-acid polypeptide reads, in one-letter code: Snaclec A8 (131 aa).

Intrachain disulfides connect Cys2–Cys13, Cys30–Cys129, and Cys104–Cys121. Positions 9–130 constitute a C-type lectin domain; sequence HEGHCYKVFN…CGQPYRFTCE (122 aa).

It belongs to the snaclec family. Heterodimer; disulfide-linked. As to expression, expressed by the venom gland.

It localises to the secreted. Functionally, interferes with one step of hemostasis (modulation of platelet aggregation, or coagulation cascade, for example). This Macrovipera lebetinus (Levantine viper) protein is Snaclec A8.